Consider the following 139-residue polypeptide: Nucleoside diphosphate kinase (139 aa).

ATP-binding residues include Lys-10, Phe-58, Arg-86, Thr-92, Arg-103, and Asn-113. Catalysis depends on His-116, which acts as the Pros-phosphohistidine intermediate.

This sequence belongs to the NDK family. Homotetramer. It depends on Mg(2+) as a cofactor.

The protein localises to the cytoplasm. It catalyses the reaction a 2'-deoxyribonucleoside 5'-diphosphate + ATP = a 2'-deoxyribonucleoside 5'-triphosphate + ADP. The catalysed reaction is a ribonucleoside 5'-diphosphate + ATP = a ribonucleoside 5'-triphosphate + ADP. Its function is as follows. Major role in the synthesis of nucleoside triphosphates other than ATP. The ATP gamma phosphate is transferred to the NDP beta phosphate via a ping-pong mechanism, using a phosphorylated active-site intermediate. The polypeptide is Nucleoside diphosphate kinase (Oleidesulfovibrio alaskensis (strain ATCC BAA-1058 / DSM 17464 / G20) (Desulfovibrio alaskensis)).